Reading from the N-terminus, the 77-residue chain is Large ribosomal subunit protein eL20 (77 aa).

Belongs to the eukaryotic ribosomal protein eL20 family. Part of the 50S ribosomal subunit. Binds 23S rRNA.

This Thermococcus onnurineus (strain NA1) protein is Large ribosomal subunit protein eL20.